The chain runs to 246 residues: B-cell receptor-associated protein 31 (246 aa).

Over 2-6 the chain is Lumenal; it reads SLQWT. A helical transmembrane segment spans residues 7–27; it reads AVATFLYAEVFVVLLLCIPFI. At 28–43 the chain is on the cytoplasmic side; sequence SPKRWQKIFKSRLVEL. Residues 44–64 traverse the membrane as a helical segment; sequence LVSYGNTFFVVLIVILVLLVI. At 65–102 the chain is on the lumenal side; it reads DAVREIRKYDDVTEKVNLQNNPGAMEHFHMKLFRAQRN. Residues 103–123 traverse the membrane as a helical segment; that stretch reads LYIAGFSLLLSFLLRRLVTLI. Residues 124–246 lie on the Cytoplasmic side of the membrane; that stretch reads SQQATLLASN…VDGPMDKKEE (123 aa). Positions 165 to 237 form a coiled coil; sequence GGKLDVGNAE…EEHAKLQAAV (73 aa). The short motif at 243-246 is the Di-lysine motif element; that stretch reads KKEE.

This sequence belongs to the BCAP29/BCAP31 family. As to quaternary structure, homodimer and heterodimer with BCAP29. Binds CASP8 (isoform 9) as a complex containing BCAP31, BCAP29, BCL2 and/or BCL2L1. Forms a complex (via C-terminus) with TOMM40 which mediates the translocation of components of the mitochondrial membrane respiratory chain NADH dehydrogenase (Complex I) from the cytosol to the mitochondria; within the complex BCAP31 interacts directly with unprocessed and processed NDUFS4 and NDUFB11. Interacts with VDAC1. Interacts with VAMP3, VAMP1 and membrane IgD immunoglobulins. Interacts with HACD2. Interacts with DNM1L; may form part of a larger protein complex at the endoplasmic reticulum-mitochondrial interface during mitochondrial fission. (Microbial infection) Interacts (via C-terminus) with HRSV membrane protein SH; this interaction is direct. In terms of processing, cleaved by CASP8 and other caspases. As to expression, ubiquitous. Highly expressed in neurons and discrete endocrine cells.

The protein localises to the endoplasmic reticulum membrane. It is found in the endoplasmic reticulum-Golgi intermediate compartment membrane. Functions as a chaperone protein. Is one of the most abundant endoplasmic reticulum (ER) proteins. Plays a role in the export of secreted proteins in the ER, the recognition of abnormally folded protein and their targeting to the ER associated-degradation (ERAD). Also serves as a cargo receptor for the export of transmembrane proteins. Plays a role in the assembly of the mitochondrial membrane respiratory chain NADH dehydrogenase (Complex I) by stimulating the translocation of NDUFS4 and NDUFB11 from the cytosol to the mitochondria via interaction with TOMM40. In response to ER stress, delocalizes from the ER-mitochondria contact sites and binds BCL2. May be involved in CASP8-mediated apoptosis. This is B-cell receptor-associated protein 31 from Homo sapiens (Human).